The following is a 643-amino-acid chain: E3 ubiquitin-protein ligase Praja-1 (643 aa).

Residues 1–363 (MGQESSKPVW…SDDYYKYCDE (363 aa)) form a disordered region. 3 stretches are compositionally biased toward basic and acidic residues: residues 95-105 (DYSRYPPREYR), 145-158 (KFKDDKLYDPEKGA), and 173-183 (RDVREERDKLD). Low complexity predominate over residues 200 to 209 (QSSVASQSSS). Basic and acidic residues predominate over residues 213 to 227 (LATKGDSSERERREQ). Ser-265 is modified (phosphoserine). At Thr-277 the chain carries Phosphothreonine. 2 stretches are compositionally biased toward basic and acidic residues: residues 289–310 (RWRDTANDNEGHSDGLARRGRG) and 320–362 (KYPE…KYCD). Phosphoserine occurs at positions 365 and 367. The disordered stretch occupies residues 380 to 454 (RSREQTLSSS…REPSLQEEQA (75 aa)). Over residues 410-439 (SASTGTSPGPGASASAGAGAGASAGSNGSN) the composition is skewed to low complexity. The RING-type zinc finger occupies 595–636 (CPICCSEYVKGEVATELPCHHYFHKPCVSIWLQKSGTCPVCR).

Binds ubiquitin-conjugating enzymes (E2s). In vitro, interacts with the ubiquitin-conjugating enzyme, UBE2D2. Substrate for E2-dependent ubiquitination. Expressed in various regions of the brain including the cerebellum, cerebral cortex, medulla, occipital pole, frontal lobe, temporal lobe and putamen. Highest levels in the cerebral cortex.

The enzyme catalyses S-ubiquitinyl-[E2 ubiquitin-conjugating enzyme]-L-cysteine + [acceptor protein]-L-lysine = [E2 ubiquitin-conjugating enzyme]-L-cysteine + N(6)-ubiquitinyl-[acceptor protein]-L-lysine.. In terms of biological role, has E2-dependent E3 ubiquitin-protein ligase activity. Ubiquitinates MAGED1 antigen leading to its subsequent degradation by proteasome. May be involved in protein sorting. This chain is E3 ubiquitin-protein ligase Praja-1 (PJA1), found in Homo sapiens (Human).